Here is a 588-residue protein sequence, read N- to C-terminus: Progranulin (588 aa).

A signal peptide spans 1–17 (MWILVSWLALVARLVAG). Asn38 carries an N-linked (GlcNAc...) asparagine glycan. Cystine bridges form between Cys125–Cys138, Cys132–Cys148, Cys281–Cys293, Cys287–Cys303, Cys294–Cys311, Cys304–Cys318, Cys312–Cys325, Cys319–Cys332, Cys363–Cys375, Cys369–Cys385, Cys394–Cys407, and Cys401–Cys413. A glycan (N-linked (GlcNAc...) asparagine) is linked at Asn372. Residue Asn525 is glycosylated (N-linked (GlcNAc...) asparagine).

This sequence belongs to the granulin family. As to quaternary structure, progranulin is secreted as a homodimer. Interacts with SLPI; interaction protects progranulin from proteolysis. Interacts (via region corresponding to granulin-7 peptide) with CTSD; stabilizes CTSD and increases its proteolytic activity. Interacts (via region corresponding to granulin-7 peptide) with SORT1; this interaction mediates endocytosis and lysosome delivery of progranulin; interaction occurs at the neuronal cell surface in a stressed nervous system. Interacts with PSAP; facilitates lysosomal delivery of progranulin from the extracellular space and the biosynthetic pathway. Forms a complex with PSAP and M6PR; PSAP bridges the binding between progranulin and M6PR. Forms a complex with PSAP and SORT1; progranulin bridges the interaction between PSAP and SORT1; facilitates lysosomal targeting of PSAP via SORT1; interaction enhances PSAP uptake in primary cortical neurons. Interacts (via regions corresponding to granulin-2 and granulin-7 peptides) with GBA1; this interaction prevents aggregation of GBA1-SCARB2 complex via interaction with HSPA1A upon stress. Interacts (via region corresponding to granulin-7 peptide) with HSPA1A; mediates recruitment of HSPA1A to GBA1 and prevents GBA1 aggregation in response to stress. In terms of processing, cleaved by ELANE; proteolysis is blocked by SLPI and is concentration- and time-dependent and induces CXCL8/IL-8 production; granulin-3 and granulin-4 are resistant to ELANE. Cleaved by CTSL in lysosome thus regulating the maturation and turnover of progranulin within the lysosome. As to expression, ubiquitous; most abundant in the spleen and several tissues of endocrine significance.

It localises to the secreted. The protein resides in the lysosome. Secreted protein that acts as a key regulator of lysosomal function and as a growth factor involved in inflammation, wound healing and cell proliferation. Regulates protein trafficking to lysosomes, and also the activity of lysosomal enzymes. Also facilitates the acidification of lysosomes, causing degradation of mature CTSD by CTSB. In addition, functions as a wound-related growth factor that acts directly on dermal fibroblasts and endothelial cells to promote division, migration and the formation of capillary-like tubule structures. Also promotes epithelial cell proliferation by blocking TNF-mediated neutrophil activation preventing release of oxidants and proteases. Moreover, modulates inflammation in neurons by preserving neurons survival, axonal outgrowth and neuronal integrity. Functionally, inhibits epithelial cell proliferation and induces epithelial cells to secrete IL-8. In terms of biological role, stabilizes CTSD through interaction with CTSD leading to maintain its aspartic-type peptidase activity. The protein is Progranulin (Grn) of Rattus norvegicus (Rat).